Consider the following 368-residue polypeptide: Protein HGH1 homolog (368 aa).

It belongs to the HGH1 family.

This Drosophila pseudoobscura pseudoobscura (Fruit fly) protein is Protein HGH1 homolog.